The chain runs to 217 residues: Somatotropin (217 aa).

Positions 1 to 27 (MMAAGPRASLLLAFALLCLPWTQEVGA) are cleaved as a signal peptide. Residue His46 participates in Zn(2+) binding. A disulfide bridge links Cys79 with Cys190. Ser132 carries the phosphoserine modification. Zn(2+) is bound at residue Glu199. Cys207 and Cys215 are disulfide-bonded.

It belongs to the somatotropin/prolactin family.

It is found in the secreted. Plays an important role in growth control. Its major role in stimulating body growth is to stimulate the liver and other tissues to secrete IGF1. It stimulates both the differentiation and proliferation of myoblasts. It also stimulates amino acid uptake and protein synthesis in muscle and other tissues. In Cervus elaphus (Red deer), this protein is Somatotropin (GH1).